A 163-amino-acid chain; its full sequence is Glycine cleavage system H protein, mitochondrial (163 aa).

A mitochondrion-targeting transit peptide spans 1 to 34 (MALRMWASSAANALGVSCAPKSHLLPALSLSRCF). Residues 56–137 (VATIGITDHA…YEEGWMVKVK (82 aa)) enclose the Lipoyl-binding domain. An N6-lipoyllysine modification is found at Lys96.

Belongs to the GcvH family. As to quaternary structure, the glycine cleavage system is composed of four proteins: P, T, L and H. The cofactor is (R)-lipoate.

The protein resides in the mitochondrion. The glycine cleavage system catalyzes the degradation of glycine. The H protein shuttles the methylamine group of glycine from the P protein to the T protein. The sequence is that of Glycine cleavage system H protein, mitochondrial (GDCSH) from Mesembryanthemum crystallinum (Common ice plant).